Reading from the N-terminus, the 501-residue chain is Prostacyclin synthase (501 aa).

Residues 1–21 (MSWAALLGLLAVLLLLLLLLS) traverse the membrane as a helical segment. Substrate-binding positions include R107, L113, N288, 359–360 (TR), and R383. Position 442 (C442) interacts with heme.

Belongs to the cytochrome P450 family. Heme serves as cofactor.

It localises to the endoplasmic reticulum membrane. It catalyses the reaction prostaglandin H2 = prostaglandin I2. The enzyme catalyses a hydroperoxyeicosatetraenoate = an oxoeicosatetraenoate + H2O. The catalysed reaction is (15S)-hydroperoxy-(5Z,8Z,11Z,13E)-eicosatetraenoate = 15-oxo-(5Z,8Z,11Z,13E)-eicosatetraenoate + H2O. It carries out the reaction (15S)-hydroperoxy-(5Z,8Z,11Z,13E)-eicosatetraenoate + AH2 = (15S)-hydroxy-(5Z,8Z,11Z,13E)-eicosatetraenoate + A + H2O. Functionally, catalyzes the biosynthesis and metabolism of eicosanoids. Catalyzes the isomerization of prostaglandin H2 to prostacyclin (= prostaglandin I2), a potent mediator of vasodilation and inhibitor of platelet aggregation. Additionally, displays dehydratase activity, toward hydroperoxyeicosatetraenoates (HPETEs), especially toward (15S)-hydroperoxy-(5Z,8Z,11Z,13E)-eicosatetraenoate (15(S)-HPETE). The chain is Prostacyclin synthase (Ptgis) from Rattus norvegicus (Rat).